The sequence spans 367 residues: tRNA/tmRNA (uracil-C(5))-methyltransferase (367 aa).

Gln-190, Tyr-218, Asn-223, Glu-239, and Asp-299 together coordinate S-adenosyl-L-methionine. The active-site Nucleophile is Cys-324. Residue Glu-358 is the Proton acceptor of the active site.

The protein belongs to the class I-like SAM-binding methyltransferase superfamily. RNA M5U methyltransferase family. TrmA subfamily.

It catalyses the reaction uridine(54) in tRNA + S-adenosyl-L-methionine = 5-methyluridine(54) in tRNA + S-adenosyl-L-homocysteine + H(+). The catalysed reaction is uridine(341) in tmRNA + S-adenosyl-L-methionine = 5-methyluridine(341) in tmRNA + S-adenosyl-L-homocysteine + H(+). In terms of biological role, dual-specificity methyltransferase that catalyzes the formation of 5-methyluridine at position 54 (m5U54) in all tRNAs, and that of position 341 (m5U341) in tmRNA (transfer-mRNA). In Dickeya chrysanthemi (strain Ech1591) (Dickeya zeae (strain Ech1591)), this protein is tRNA/tmRNA (uracil-C(5))-methyltransferase.